Reading from the N-terminus, the 652-residue chain is DNA ligase (652 aa).

Residues 29 to 33 (DSEYD), 78 to 79 (SL), and E107 contribute to the NAD(+) site. K109 acts as the N6-AMP-lysine intermediate in catalysis. Residues R130, E164, K278, and K302 each contribute to the NAD(+) site. Residues C395, C398, C413, and C418 each coordinate Zn(2+). The BRCT domain maps to 577 to 652 (DRQAELFGLT…IEDEDWLLNL (76 aa)).

This sequence belongs to the NAD-dependent DNA ligase family. LigA subfamily. Mg(2+) is required as a cofactor. Mn(2+) serves as cofactor.

The catalysed reaction is NAD(+) + (deoxyribonucleotide)n-3'-hydroxyl + 5'-phospho-(deoxyribonucleotide)m = (deoxyribonucleotide)n+m + AMP + beta-nicotinamide D-nucleotide.. DNA ligase that catalyzes the formation of phosphodiester linkages between 5'-phosphoryl and 3'-hydroxyl groups in double-stranded DNA using NAD as a coenzyme and as the energy source for the reaction. It is essential for DNA replication and repair of damaged DNA. The polypeptide is DNA ligase (Streptococcus equi subsp. zooepidemicus (strain MGCS10565)).